The primary structure comprises 84 residues: uncharacterized protein (84 aa).

One can recognise a 2Fe-2S ferredoxin-type domain in the interval 2 to 84 (ARVTLRITGT…RAKGDIEIEM (83 aa)). [2Fe-2S] cluster contacts are provided by C37, C42, C45, and C74.

[2Fe-2S] cluster is required as a cofactor.

This is an uncharacterized protein from Escherichia coli O6:H1 (strain CFT073 / ATCC 700928 / UPEC).